The primary structure comprises 470 residues: ATP synthase subunit beta (470 aa).

An ATP-binding site is contributed by 156–163; that stretch reads GGAGVGKT.

This sequence belongs to the ATPase alpha/beta chains family. As to quaternary structure, F-type ATPases have 2 components, CF(1) - the catalytic core - and CF(0) - the membrane proton channel. CF(1) has five subunits: alpha(3), beta(3), gamma(1), delta(1), epsilon(1). CF(0) has three main subunits: a(1), b(2) and c(9-12). The alpha and beta chains form an alternating ring which encloses part of the gamma chain. CF(1) is attached to CF(0) by a central stalk formed by the gamma and epsilon chains, while a peripheral stalk is formed by the delta and b chains.

The protein resides in the cell inner membrane. It catalyses the reaction ATP + H2O + 4 H(+)(in) = ADP + phosphate + 5 H(+)(out). Its function is as follows. Produces ATP from ADP in the presence of a proton gradient across the membrane. The catalytic sites are hosted primarily by the beta subunits. The sequence is that of ATP synthase subunit beta from Nitratidesulfovibrio vulgaris (strain ATCC 29579 / DSM 644 / CCUG 34227 / NCIMB 8303 / VKM B-1760 / Hildenborough) (Desulfovibrio vulgaris).